We begin with the raw amino-acid sequence, 261 residues long: Serine acetyltransferase (261 aa).

It belongs to the transferase hexapeptide repeat family.

It is found in the cytoplasm. The catalysed reaction is L-serine + acetyl-CoA = O-acetyl-L-serine + CoA. The protein operates within amino-acid biosynthesis; L-cysteine biosynthesis; L-cysteine from L-serine: step 1/2. This Buchnera aphidicola subsp. Schizaphis graminum (strain Sg) protein is Serine acetyltransferase (cysE).